The sequence spans 322 residues: MPITRMRMRPWLEMQINSNQIPGLIWINKEEMIFQIPWKHAAKHGWDINKDACLFRSWAIHTGRYKAGEKEPDPKTWKANFRCAMNSLPDIEEVKDQSRNKGSSAVRVYRMLPPLTKSQRKERKSKSSRDARSKAKKKPYGEYSPDTFSDGLSSSTLPDDHSNYTVRSYMGQDLDIERTLTPALSPCGVSSTLPNWSIPVEIVPDSTSDLYNFQVSPMPSTSEAATDEDEEGKLTEDIMKLLEQTGWQQTSVDGKGYLLNEPGAQPTSVYGEFSCKEEPEVDSPGGYIGLISSDMKNMDPSLLDSLLTPVRLPSIQAIPCAP.

The IRF tryptophan pentad repeat DNA-binding region spans 5 to 113 (RMRMRPWLEM…SAVRVYRMLP (109 aa)). Lysine 78 is subject to N6-acetyllysine. The segment at 92–164 (EEVKDQSRNK…STLPDDHSNY (73 aa)) is disordered. The span at 146-157 (DTFSDGLSSSTL) shows a compositional bias: polar residues. Glycyl lysine isopeptide (Lys-Gly) (interchain with G-Cter in SUMO) cross-links involve residues lysine 276 and lysine 296.

Belongs to the IRF family. As to quaternary structure, monomer. Homodimer. Interacts with EP300. Interacts with MYD88. Interacts with PIAS3. Interacts with SPOP. Post-translationally, phosphorylated by CK2 and this positively regulates its activity. In terms of processing, sumoylation represses the transcriptional activity and displays enhanced resistance to protein degradation. Sumoylated by UBE2I/UBC9 and SUMO1. Inactivates the tumor suppressor activity. Elevated levels in tumor cells. Major site is Lys-276. Sumoylation is enhanced by PIAS3. Desumoylated by SENP1 in tumor cells and appears to compete with ubiquitination on C-terminal sites. Ubiquitinated in a SPOP-depedent manner. Appears to compete with sumoylation on C-terminal sites.

Its subcellular location is the nucleus. It is found in the cytoplasm. With respect to regulation, activated by MYD88. Transcriptional regulator which displays a remarkable functional diversity in the regulation of cellular responses. Regulates transcription of IFN and IFN-inducible genes, host response to viral and bacterial infections, regulation of many genes expressed during hematopoiesis, inflammation, immune responses and cell proliferation and differentiation, regulation of the cell cycle and induction of growth arrest and programmed cell death following DNA damage. Stimulates both innate and acquired immune responses through the activation of specific target genes and can act as a transcriptional activator and repressor regulating target genes by binding to an interferon-stimulated response element (ISRE) in their promoters. Has an essentail role in IFNG-dependent immunity to mycobacteria. Binds to a consensus sequence in gene promoters. Its target genes for transcriptional activation activity include: genes involved in anti-viral response, such as IFN-alpha/beta, RIGI, TNFSF10/TRAIL, ZBP1, OAS1/2, PIAS1/GBP, EIF2AK2/PKR and RSAD2/viperin; antibacterial response, such as GBP2, GBP5 and NOS2/INOS; anti-proliferative response, such as p53/TP53, LOX and CDKN1A; apoptosis, such as BBC3/PUMA, CASP1, CASP7 and CASP8; immune response, such as IL7, IL12A/B and IL15, PTGS2/COX2 and CYBB; DNA damage responses and DNA repair, such as POLQ/POLH; MHC class I expression, such as TAP1, PSMB9/LMP2, PSME1/PA28A, PSME2/PA28B and B2M and MHC class II expression, such as CIITA; metabolic enzymes, such as ACOD1/IRG1. Represses genes involved in anti-proliferative response, such as BIRC5/survivin, CCNB1, CCNE1, CDK1, CDK2 and CDK4 and in immune response, such as FOXP3, IL4, ANXA2 and TLR4. Stimulates p53/TP53-dependent transcription through enhanced recruitment of EP300 leading to increased acetylation of p53/TP53. Plays an important role in immune response directly affecting NK maturation and activity, macrophage production of IL12, Th1 development and maturation of CD8+ T-cells. Also implicated in the differentiation and maturation of dendritic cells and in the suppression of regulatory T (Treg) cells development. Acts as a tumor suppressor and plays a role not only in antagonism of tumor cell growth but also in stimulating an immune response against tumor cells. In Bos taurus (Bovine), this protein is Interferon regulatory factor 1 (IRF1).